We begin with the raw amino-acid sequence, 362 residues long: METTTRKQKKALETKKPSIYSLQLHEMQEWLKEQGEPKFRAGQIFDWLYKKRVKNYEDMTNLSKGLREKLSNSFDITTLNTLVKQTSSDGTIKFLFQLYDGYSIETVLMRHEYGNSICVTTQVGCRIGCTFCASTLGGLKRNLEAGEIVAQVVEVQRALDETNERVSSLVVMGIGEPFDNYDHLMSFLRIVNHEKGINIGARHMTVSTSGIIPKIYKFAEEDLQINFAISLHAPNTELRSKLMPINRAYKLPDLMEAIKYYINRTGRRVTFEYGLFGGENDQVEHAEELAQLLKGVKCHVNLIPVNYVPERDYVRTPREQIFLFEKTLKNRGVNVTIRREQGHDIDAACGQLRAKERKEETR.

The Proton acceptor role is filled by E105. Positions 111 to 344 (HEYGNSICVT…VTIRREQGHD (234 aa)) constitute a Radical SAM core domain. C118 and C349 are joined by a disulfide. Residues C125, C129, and C132 each contribute to the [4Fe-4S] cluster site. S-adenosyl-L-methionine contacts are provided by residues 175–176 (GE), S207, 230–232 (SLH), and N306. C349 (S-methylcysteine intermediate) is an active-site residue.

It belongs to the radical SAM superfamily. RlmN family. It depends on [4Fe-4S] cluster as a cofactor.

Its subcellular location is the cytoplasm. The enzyme catalyses adenosine(2503) in 23S rRNA + 2 reduced [2Fe-2S]-[ferredoxin] + 2 S-adenosyl-L-methionine = 2-methyladenosine(2503) in 23S rRNA + 5'-deoxyadenosine + L-methionine + 2 oxidized [2Fe-2S]-[ferredoxin] + S-adenosyl-L-homocysteine. It carries out the reaction adenosine(37) in tRNA + 2 reduced [2Fe-2S]-[ferredoxin] + 2 S-adenosyl-L-methionine = 2-methyladenosine(37) in tRNA + 5'-deoxyadenosine + L-methionine + 2 oxidized [2Fe-2S]-[ferredoxin] + S-adenosyl-L-homocysteine. Functionally, specifically methylates position 2 of adenine 2503 in 23S rRNA and position 2 of adenine 37 in tRNAs. The protein is Probable dual-specificity RNA methyltransferase RlmN of Bacillus cytotoxicus (strain DSM 22905 / CIP 110041 / 391-98 / NVH 391-98).